The following is a 133-amino-acid chain: Basic leucine zipper transcriptional factor ATF-like 3 (133 aa).

The tract at residues Met1–Ser68 is disordered. Ser2 and Ser24 each carry phosphoserine. Residues Leu11–Ser24 show a composition bias toward polar residues. The 64-residue stretch at Asp28 to His91 folds into the bZIP domain. Positions Arg30 to Lys55 are basic motif. Residues Gln51–Ser68 show a composition bias toward basic and acidic residues. The interval Leu56–Leu84 is leucine-zipper.

The protein belongs to the bZIP family. Heterodimer; heterodimerizes with JUN family proteins. Interacts with JUN. As to expression, ubiquitously expressed.

Its subcellular location is the nucleus. AP-1 family transcription factor that controls the differentiation of CD8(+) thymic conventional dendritic cells in the immune system. Acts via the formation of a heterodimer with JUN family proteins that recognizes and binds DNA sequence 5'-TGA[CG]TCA-3' and regulates expression of target genes. Required for development of CD8-alpha(+) classical dendritic cells (cDCs) and related CD103(+) dendritic cells that cross-present antigens to CD8 T-cells and produce interleukin-12 (IL12) in response to pathogens. The chain is Basic leucine zipper transcriptional factor ATF-like 3 (Batf3) from Rattus norvegicus (Rat).